The following is a 466-amino-acid chain: 3-isopropylmalate dehydratase large subunit (466 aa).

The [4Fe-4S] cluster site is built by Cys-347, Cys-407, and Cys-410.

Belongs to the aconitase/IPM isomerase family. LeuC type 1 subfamily. In terms of assembly, heterodimer of LeuC and LeuD. It depends on [4Fe-4S] cluster as a cofactor.

The enzyme catalyses (2R,3S)-3-isopropylmalate = (2S)-2-isopropylmalate. It functions in the pathway amino-acid biosynthesis; L-leucine biosynthesis; L-leucine from 3-methyl-2-oxobutanoate: step 2/4. Its function is as follows. Catalyzes the isomerization between 2-isopropylmalate and 3-isopropylmalate, via the formation of 2-isopropylmaleate. The chain is 3-isopropylmalate dehydratase large subunit from Blochmanniella floridana.